A 25-amino-acid polypeptide reads, in one-letter code: Bifunctional chitinase/lysozyme (25 aa).

This sequence belongs to the glycosyl hydrolase 19 family. Chitinase class I subfamily. As to quaternary structure, monomer.

It localises to the secreted. It is found in the extracellular space. The enzyme catalyses Random endo-hydrolysis of N-acetyl-beta-D-glucosaminide (1-&gt;4)-beta-linkages in chitin and chitodextrins.. It catalyses the reaction Hydrolysis of (1-&gt;4)-beta-linkages between N-acetylmuramic acid and N-acetyl-D-glucosamine residues in a peptidoglycan and between N-acetyl-D-glucosamine residues in chitodextrins.. Functionally, bifunctional enzyme with lysozyme/chitinase activity. The polypeptide is Bifunctional chitinase/lysozyme (Carica papaya (Papaya)).